The sequence spans 358 residues: Protein Wnt-8b (358 aa).

The N-terminal stretch at 1–23 (MFMHLEVYYYAFILMAHMKTCCG) is a signal peptide. C55 and C66 form a disulfide bridge. N104 is a glycosylation site (N-linked (GlcNAc...) asparagine). Intrachain disulfides connect C105-C113, C115-C133, C181-C195, C183-C190, C257-C295, C273-C288, C292-C334, C310-C325, C312-C322, and C317-C318. S187 carries the O-palmitoleoyl serine lipid modification. 2 N-linked (GlcNAc...) asparagine glycosylation sites follow: N260 and N279. N345 carries N-linked (GlcNAc...) asparagine glycosylation.

Belongs to the Wnt family. In terms of processing, palmitoleoylation is required for efficient binding to frizzled receptors. Depalmitoleoylation leads to Wnt signaling pathway inhibition. Post-translationally, proteolytic processing by tiki1 and tiki2 promotes oxidation and formation of large disulfide-bond oligomers, leading to inactivation of wnt8b. In terms of tissue distribution, hindbrain r1, 2 and 5.

The protein resides in the secreted. It is found in the extracellular space. Its subcellular location is the extracellular matrix. Ligand for fzd8a, a member of the G-protein coupled frizzled receptor family. May play a role in the establishment of polarity in the nervous system. Involved in canonical Wnt signaling pathway. During embryonic development, required for the acquisition of caudal diencephalic fate. Antagonizes eye specification. This chain is Protein Wnt-8b (wnt8b), found in Danio rerio (Zebrafish).